The chain runs to 78 residues: Serine rich endogenous peptide 19 (78 aa).

The signal sequence occupies residues 1–25 (MCNIVVFLLTLTLFLFSGLSNTAFA). Positions 50–64 (KIEVDGSCSRRAPGR) match the SCOOP motif motif. The SxS motif essential for MIK2 binding motif lies at 56-58 (SCS). A disordered region spans residues 57–78 (CSRRAPGRRRPPNRPPKPCTKP). The segment covering 69-78 (NRPPKPCTKP) has biased composition (pro residues).

The protein belongs to the serine rich endogenous peptide (SCOOP) phytocytokine family. As to quaternary structure, interacts with MIK2 (via extracellular leucine-rich repeat domain); this interaction triggers the formation of complex between MIK2 and the BAK1/SERK3 and SERK4 coreceptors, and subsequent BAK1 activation by phosphorylation.

It localises to the cell membrane. It is found in the secreted. The protein localises to the extracellular space. Its subcellular location is the apoplast. Functionally, brassicaceae-specific phytocytokine (plant endogenous peptide released into the apoplast) perceived by MIK2 in a BAK1/SERK3 and SERK4 coreceptors-dependent manner, that modulates various physiological and antimicrobial processes including growth prevention and reactive oxygen species (ROS) response regulation. This Arabidopsis thaliana (Mouse-ear cress) protein is Serine rich endogenous peptide 19.